The chain runs to 294 residues: Acetylglutamate kinase (294 aa).

Substrate contacts are provided by residues 63–64, Arg-85, and Asn-188; that span reads GG.

It belongs to the acetylglutamate kinase family. ArgB subfamily.

The protein resides in the cytoplasm. The enzyme catalyses N-acetyl-L-glutamate + ATP = N-acetyl-L-glutamyl 5-phosphate + ADP. Its pathway is amino-acid biosynthesis; L-arginine biosynthesis; N(2)-acetyl-L-ornithine from L-glutamate: step 2/4. Functionally, catalyzes the ATP-dependent phosphorylation of N-acetyl-L-glutamate. The polypeptide is Acetylglutamate kinase (Methanococcus aeolicus (strain ATCC BAA-1280 / DSM 17508 / OCM 812 / Nankai-3)).